The sequence spans 98 residues: NADH-ubiquinone oxidoreductase chain 4L (98 aa).

The next 3 membrane-spanning stretches (helical) occupy residues 1-21 (MPII…GMLV), 29-49 (SLLC…LMAL), and 61-81 (IALL…LVSI).

Belongs to the complex I subunit 4L family. Core subunit of respiratory chain NADH dehydrogenase (Complex I) which is composed of 45 different subunits.

The protein localises to the mitochondrion inner membrane. It catalyses the reaction a ubiquinone + NADH + 5 H(+)(in) = a ubiquinol + NAD(+) + 4 H(+)(out). Core subunit of the mitochondrial membrane respiratory chain NADH dehydrogenase (Complex I) which catalyzes electron transfer from NADH through the respiratory chain, using ubiquinone as an electron acceptor. Part of the enzyme membrane arm which is embedded in the lipid bilayer and involved in proton translocation. The polypeptide is NADH-ubiquinone oxidoreductase chain 4L (MT-ND4L) (Piliocolobus badius (Western red colobus)).